Reading from the N-terminus, the 290-residue chain is Ribosomal protein L11 methyltransferase (290 aa).

The S-adenosyl-L-methionine site is built by T136, G159, D181, and N228.

The protein belongs to the methyltransferase superfamily. PrmA family.

The protein localises to the cytoplasm. The catalysed reaction is L-lysyl-[protein] + 3 S-adenosyl-L-methionine = N(6),N(6),N(6)-trimethyl-L-lysyl-[protein] + 3 S-adenosyl-L-homocysteine + 3 H(+). Functionally, methylates ribosomal protein L11. The chain is Ribosomal protein L11 methyltransferase from Allorhizobium ampelinum (strain ATCC BAA-846 / DSM 112012 / S4) (Agrobacterium vitis (strain S4)).